Consider the following 207-residue polypeptide: Protein TEX261 homolog (207 aa).

4 helical membrane-spanning segments follow: residues 2–22, 54–74, 94–114, and 126–146; these read FLSL…VVCL, IIFL…FSFI, YKFI…FIYF, and IIAI…ISLA.

This sequence belongs to the SVP26 family.

The protein resides in the membrane. This Dictyostelium discoideum (Social amoeba) protein is Protein TEX261 homolog.